We begin with the raw amino-acid sequence, 137 residues long: Fibroblast growth factor 2 (137 aa).

N27 serves as a coordination point for heparin. Y73 bears the Phosphotyrosine; by TEC mark. K86 is covalently cross-linked (Glycyl lysine isopeptide (Lys-Gly) (interchain with G-Cter in SUMO1)). A heparin-binding region spans residues 119–135 (KRTGQYKLGSKTGPGQK).

The protein belongs to the heparin-binding growth factors family. As to quaternary structure, monomer. Homodimer. Interacts with FGFR1, FGFR2, FGFR3 and FGFR4. Affinity between fibroblast growth factors (FGFs) and their receptors is increased by heparan sulfate glycosaminoglycans that function as coreceptors. Interacts with CSPG4, FGFBP1 and TEC. Found in a complex with FGFBP1, FGF1 and FGF2. Interacts with FGFBP3. Interacts with integrin ITGAV:ITGB3; the interaction is required for FGF2 signaling. Interacts with SNORC (via the extracellular domain). Interacts with glypican GPC3. Phosphorylation at Tyr-73 regulates FGF2 unconventional secretion.

The protein localises to the secreted. It is found in the nucleus. Its function is as follows. Acts as a ligand for FGFR1, FGFR2, FGFR3 and FGFR4. Also acts as an integrin ligand which is required for FGF2 signaling. Binds to integrin ITGAV:ITGB3. Plays an important role in the regulation of cell survival, cell division, cell differentiation and cell migration. Functions as a potent mitogen in vitro. Can induce angiogenesis. Mediates phosphorylation of ERK1/2 and thereby promotes retinal lens fiber differentiation. This chain is Fibroblast growth factor 2 (FGF2), found in Oryctolagus cuniculus (Rabbit).